A 166-amino-acid polypeptide reads, in one-letter code: Phosphopantetheine adenylyltransferase (166 aa).

A substrate-binding site is contributed by Ser-8. ATP is bound by residues 8 to 9 (SF) and His-16. Positions 40, 72, and 86 each coordinate substrate. Residues 87–89 (GLR), Glu-97, and 122–128 (HSFLSSS) contribute to the ATP site.

The protein belongs to the bacterial CoaD family. Homohexamer. It depends on Mg(2+) as a cofactor.

It is found in the cytoplasm. The enzyme catalyses (R)-4'-phosphopantetheine + ATP + H(+) = 3'-dephospho-CoA + diphosphate. Its pathway is cofactor biosynthesis; coenzyme A biosynthesis; CoA from (R)-pantothenate: step 4/5. Reversibly transfers an adenylyl group from ATP to 4'-phosphopantetheine, yielding dephospho-CoA (dPCoA) and pyrophosphate. This chain is Phosphopantetheine adenylyltransferase, found in Synechococcus sp. (strain RCC307).